Here is a 346-residue protein sequence, read N- to C-terminus: Biotin synthase (346 aa).

The region spanning 38-256 is the Radical SAM core domain; it reads RQVQVSTLLS…IAVARIMMPT (219 aa). [4Fe-4S] cluster-binding residues include Cys53, Cys57, and Cys60. Residues Cys97, Cys128, Cys188, and Arg260 each contribute to the [2Fe-2S] cluster site.

This sequence belongs to the radical SAM superfamily. Biotin synthase family. As to quaternary structure, homodimer. [4Fe-4S] cluster is required as a cofactor. [2Fe-2S] cluster serves as cofactor.

It carries out the reaction (4R,5S)-dethiobiotin + (sulfur carrier)-SH + 2 reduced [2Fe-2S]-[ferredoxin] + 2 S-adenosyl-L-methionine = (sulfur carrier)-H + biotin + 2 5'-deoxyadenosine + 2 L-methionine + 2 oxidized [2Fe-2S]-[ferredoxin]. The protein operates within cofactor biosynthesis; biotin biosynthesis; biotin from 7,8-diaminononanoate: step 2/2. In terms of biological role, catalyzes the conversion of dethiobiotin (DTB) to biotin by the insertion of a sulfur atom into dethiobiotin via a radical-based mechanism. This chain is Biotin synthase, found in Shigella boydii serotype 18 (strain CDC 3083-94 / BS512).